The following is a 422-amino-acid chain: Acyl-[acyl-carrier-protein] desaturase 6, chloroplastic (422 aa).

Residues 1 to 46 (MAATATMAMPLANRLRCKPNTNSSSPSRTLFGRRVTMISSSRWMCR) constitute a chloroplast transit peptide. 6 residues coordinate Fe cation: glutamate 154, glutamate 192, histidine 195, glutamate 245, glutamate 280, and histidine 283.

Belongs to the fatty acid desaturase type 2 family. Homodimer. Fe(2+) serves as cofactor.

The protein localises to the plastid. The protein resides in the chloroplast. The protein operates within lipid metabolism; fatty acid metabolism. In terms of biological role, introduces a cis double bond in the acyl chain of an acyl-[acyl-carrier protein]. The polypeptide is Acyl-[acyl-carrier-protein] desaturase 6, chloroplastic (Oryza sativa subsp. indica (Rice)).